The chain runs to 31 residues: DIFCGETCAFIPCITHVPGTCSCKSKVCYFN.

A cross-link (cyclopeptide (Asp-Asn)) is located at residues 1–31 (DIFCGETCAFIPCITHVPGTCSCKSKVCYFN). 3 disulfides stabilise this stretch: Cys-4-Cys-21, Cys-8-Cys-23, and Cys-13-Cys-28.

In terms of processing, this is a cyclic peptide. As to expression, expressed in roots and runners but not in leaves, petals and petioles (at protein level).

Functionally, probably participates in a plant defense mechanism. The sequence is that of Cycloviolacin-O25 from Viola odorata (Sweet violet).